Reading from the N-terminus, the 226-residue chain is PKHD-type hydroxylase Nwi_0701 (226 aa).

One can recognise a Fe2OG dioxygenase domain in the interval 78–178 (KVLPPRFNRY…RLAAFFWTQS (101 aa)). Residues H96, D98, and H159 each coordinate Fe cation. Residue R169 participates in 2-oxoglutarate binding.

Fe(2+) serves as cofactor. Requires L-ascorbate as cofactor.

The chain is PKHD-type hydroxylase Nwi_0701 from Nitrobacter winogradskyi (strain ATCC 25391 / DSM 10237 / CIP 104748 / NCIMB 11846 / Nb-255).